A 222-amino-acid chain; its full sequence is UPF0173 metal-dependent hydrolase Kcr_0055 (222 aa).

Belongs to the UPF0173 family.

This chain is UPF0173 metal-dependent hydrolase Kcr_0055, found in Korarchaeum cryptofilum (strain OPF8).